Reading from the N-terminus, the 188-residue chain is Probable manganese efflux pump MntP (188 aa).

Transmembrane regions (helical) follow at residues 3 to 23 (ITAT…ASIG), 66 to 86 (LEWN…RMII), 106 to 128 (WLLV…GLAF), 143 to 163 (ATLI…PILG), and 168 to 188 (ILGG…HFHG).

This sequence belongs to the MntP (TC 9.B.29) family.

It is found in the cell inner membrane. Its function is as follows. Probably functions as a manganese efflux pump. The protein is Probable manganese efflux pump MntP of Escherichia fergusonii (strain ATCC 35469 / DSM 13698 / CCUG 18766 / IAM 14443 / JCM 21226 / LMG 7866 / NBRC 102419 / NCTC 12128 / CDC 0568-73).